The sequence spans 274 residues: 2-dehydro-3-deoxyphosphooctonate aldolase (274 aa).

This sequence belongs to the KdsA family.

It is found in the cytoplasm. It carries out the reaction D-arabinose 5-phosphate + phosphoenolpyruvate + H2O = 3-deoxy-alpha-D-manno-2-octulosonate-8-phosphate + phosphate. It participates in carbohydrate biosynthesis; 3-deoxy-D-manno-octulosonate biosynthesis; 3-deoxy-D-manno-octulosonate from D-ribulose 5-phosphate: step 2/3. It functions in the pathway bacterial outer membrane biogenesis; lipopolysaccharide biosynthesis. This chain is 2-dehydro-3-deoxyphosphooctonate aldolase, found in Rickettsia rickettsii (strain Iowa).